Reading from the N-terminus, the 187-residue chain is Putative adenylate kinase (187 aa).

Residues Gly10, Gly12, Lys13, Thr14, and Ile15 each contribute to the ATP site. The NMP stretch occupies residues 30–53 (SLSQFVIENKLYTEYDELRQSYII). Residues 103-113 (GRGWADIKVAE) are LID. Arg104 serves as a coordination point for ATP.

It belongs to the adenylate kinase family. AK6 subfamily. Interacts with uS11. Not a structural component of 40S pre-ribosomes, but transiently interacts with them by binding to uS11.

The enzyme catalyses AMP + ATP = 2 ADP. The catalysed reaction is ATP + H2O = ADP + phosphate + H(+). In terms of biological role, broad-specificity nucleoside monophosphate (NMP) kinase that catalyzes the reversible transfer of the terminal phosphate group between nucleoside triphosphates and monophosphates. Also has ATPase activity. Involved in the late maturation steps of the 30S ribosomal particles, specifically 16S rRNA maturation. While NMP activity is not required for ribosome maturation, ATPase activity is. Associates transiently with small ribosomal subunit protein uS11. ATP hydrolysis breaks the interaction with uS11. May temporarily remove uS11 from the ribosome to enable a conformational change of the ribosomal RNA that is needed for the final maturation step of the small ribosomal subunit. The polypeptide is Putative adenylate kinase (Saccharolobus islandicus (strain L.S.2.15 / Lassen #1) (Sulfolobus islandicus)).